The following is a 115-amino-acid chain: NAD(P)H-quinone oxidoreductase subunit M, organellar chromatophore (115 aa).

It belongs to the complex I NdhM subunit family. In terms of assembly, NDH-1 can be composed of about 15 different subunits; different subcomplexes with different compositions have been identified which probably have different functions.

It localises to the plastid. Its subcellular location is the organellar chromatophore thylakoid membrane. It carries out the reaction a plastoquinone + NADH + (n+1) H(+)(in) = a plastoquinol + NAD(+) + n H(+)(out). The enzyme catalyses a plastoquinone + NADPH + (n+1) H(+)(in) = a plastoquinol + NADP(+) + n H(+)(out). Functionally, NDH-1 shuttles electrons from an unknown electron donor, via FMN and iron-sulfur (Fe-S) centers, to quinones in the respiratory and/or the photosynthetic chain. The immediate electron acceptor for the enzyme in this species is believed to be plastoquinone. Couples the redox reaction to proton translocation, and thus conserves the redox energy in a proton gradient. The chain is NAD(P)H-quinone oxidoreductase subunit M, organellar chromatophore from Paulinella chromatophora.